The following is a 382-amino-acid chain: Carbamoyl phosphate synthase small chain (382 aa).

Positions M1 to D189 are CPSase. L-glutamine is bound by residues S47 and G241. One can recognise a Glutamine amidotransferase type-1 domain in the interval H193–S380. C269 functions as the Nucleophile in the catalytic mechanism. Positions 270, 273, 311, 313, and 314 each coordinate L-glutamine. Catalysis depends on residues H353 and E355.

The protein belongs to the CarA family. As to quaternary structure, composed of two chains; the small (or glutamine) chain promotes the hydrolysis of glutamine to ammonia, which is used by the large (or ammonia) chain to synthesize carbamoyl phosphate. Tetramer of heterodimers (alpha,beta)4.

It carries out the reaction hydrogencarbonate + L-glutamine + 2 ATP + H2O = carbamoyl phosphate + L-glutamate + 2 ADP + phosphate + 2 H(+). The catalysed reaction is L-glutamine + H2O = L-glutamate + NH4(+). It functions in the pathway amino-acid biosynthesis; L-arginine biosynthesis; carbamoyl phosphate from bicarbonate: step 1/1. Its pathway is pyrimidine metabolism; UMP biosynthesis via de novo pathway; (S)-dihydroorotate from bicarbonate: step 1/3. Functionally, small subunit of the glutamine-dependent carbamoyl phosphate synthetase (CPSase). CPSase catalyzes the formation of carbamoyl phosphate from the ammonia moiety of glutamine, carbonate, and phosphate donated by ATP, constituting the first step of 2 biosynthetic pathways, one leading to arginine and/or urea and the other to pyrimidine nucleotides. The small subunit (glutamine amidotransferase) binds and cleaves glutamine to supply the large subunit with the substrate ammonia. In Salmonella typhi, this protein is Carbamoyl phosphate synthase small chain.